The chain runs to 282 residues: Bis(5'-nucleosyl)-tetraphosphatase, symmetrical (282 aa).

This sequence belongs to the Ap4A hydrolase family.

It catalyses the reaction P(1),P(4)-bis(5'-adenosyl) tetraphosphate + H2O = 2 ADP + 2 H(+). Its function is as follows. Hydrolyzes diadenosine 5',5'''-P1,P4-tetraphosphate to yield ADP. The chain is Bis(5'-nucleosyl)-tetraphosphatase, symmetrical from Klebsiella pneumoniae subsp. pneumoniae (strain ATCC 700721 / MGH 78578).